Reading from the N-terminus, the 703-residue chain is Elongation factor G 1 (703 aa).

The 284-residue stretch at 8 to 291 (ERYRNIGISA…AVIDYLPSPV (284 aa)) folds into the tr-type G domain. GTP is bound by residues 17–24 (AHIDAGKT), 88–92 (DTPGH), and 142–145 (NKMD).

The protein belongs to the TRAFAC class translation factor GTPase superfamily. Classic translation factor GTPase family. EF-G/EF-2 subfamily.

The protein resides in the cytoplasm. Catalyzes the GTP-dependent ribosomal translocation step during translation elongation. During this step, the ribosome changes from the pre-translocational (PRE) to the post-translocational (POST) state as the newly formed A-site-bound peptidyl-tRNA and P-site-bound deacylated tRNA move to the P and E sites, respectively. Catalyzes the coordinated movement of the two tRNA molecules, the mRNA and conformational changes in the ribosome. The protein is Elongation factor G 1 of Burkholderia orbicola (strain AU 1054).